A 406-amino-acid polypeptide reads, in one-letter code: MTVSKKVEENIFASKLGPEYVGFDHITWYVGNAKQAASYYVTRMGFKQIAYRGPETGSRSVVSHVISNGQAIFVLTSPIRSMAGTGAYDDDPDVTKADRRLLEEIHNHLIKHGDGVKDVAFRIEGDIEAVWKRAVDHGAAPVAAPTTLKDDRHGSITLATIGTYEDTVHSLINRHDYSGPFLPGYEVVTDDDPINRLLPSIDFIEIDHCVGNQPWNGVDPIVKYYEDCLNFHRYWTVDDLNMCGEYSAMRSIVVASPNEVIKMPMNEPAQGKKKSQIEEFVNYYNGAGVQHIAFRTHDIVTAVTRLRERGVSFLEVPSAYYSDLRQRLSHTGLTLEEDIAVLEKLHILVDFDEKGYLLQIFSKHVLDRPTVFIEVIQRNNFDGFGAGNFKSLFEAFEREQARRGNL.

VOC domains follow at residues 22–174 and 205–363; these read GFDH…LINR and EIDH…IFSK. The Fe cation site is built by H208, H291, and E374.

It belongs to the 4HPPD family. It depends on Fe cation as a cofactor.

The catalysed reaction is 3-(4-hydroxyphenyl)pyruvate + O2 = homogentisate + CO2. The protein operates within amino-acid degradation; L-phenylalanine degradation; acetoacetate and fumarate from L-phenylalanine: step 3/6. The chain is Probable 4-hydroxyphenylpyruvate dioxygenase 2 from Aspergillus fumigatus (strain ATCC MYA-4609 / CBS 101355 / FGSC A1100 / Af293) (Neosartorya fumigata).